The primary structure comprises 423 residues: COP9 signalosome complex subunit 3 (423 aa).

The region spanning 197–365 is the PCI domain; that stretch reads NFERALYFYE…GMVCFHDNPE (169 aa). Residues 402-423 form a disordered region; it reads QFVQKSMGSQEDDSGTKPSSYS.

This sequence belongs to the CSN3 family. Component of the CSN complex, probably composed of COPS1, COPS2, COPS3, COPS4, COPS5, COPS6, COPS7, COPS8 and COPS9.

It localises to the cytoplasm. The protein resides in the nucleus. Functionally, component of the COP9 signalosome complex (CSN), a complex involved in various cellular and developmental processes. The CSN complex is an essential regulator of the ubiquitin (Ubl) conjugation pathway by mediating the deneddylation of the cullin subunits of E3 ligase complexes, leading to modify the Ubl ligase activity. The polypeptide is COP9 signalosome complex subunit 3 (COPS3) (Gallus gallus (Chicken)).